Here is an 854-residue protein sequence, read N- to C-terminus: DNA mismatch repair protein MutS (854 aa).

615–622 (GPNMGGKS) contributes to the ATP binding site.

The protein belongs to the DNA mismatch repair MutS family.

Functionally, this protein is involved in the repair of mismatches in DNA. It is possible that it carries out the mismatch recognition step. This protein has a weak ATPase activity. This chain is DNA mismatch repair protein MutS, found in Proteus mirabilis (strain HI4320).